Reading from the N-terminus, the 294-residue chain is 33 kDa chaperonin (294 aa).

Disulfide bonds link Cys-238–Cys-240 and Cys-271–Cys-274.

This sequence belongs to the HSP33 family. Under oxidizing conditions two disulfide bonds are formed involving the reactive cysteines. Under reducing conditions zinc is bound to the reactive cysteines and the protein is inactive.

Its subcellular location is the cytoplasm. Functionally, redox regulated molecular chaperone. Protects both thermally unfolding and oxidatively damaged proteins from irreversible aggregation. Plays an important role in the bacterial defense system toward oxidative stress. This Staphylococcus carnosus (strain TM300) protein is 33 kDa chaperonin.